Consider the following 202-residue polypeptide: dTTP/UTP pyrophosphatase (202 aa).

Residue aspartate 80 is the Proton acceptor of the active site.

Belongs to the Maf family. YhdE subfamily. Requires a divalent metal cation as cofactor.

The protein localises to the cytoplasm. The enzyme catalyses dTTP + H2O = dTMP + diphosphate + H(+). The catalysed reaction is UTP + H2O = UMP + diphosphate + H(+). Functionally, nucleoside triphosphate pyrophosphatase that hydrolyzes dTTP and UTP. May have a dual role in cell division arrest and in preventing the incorporation of modified nucleotides into cellular nucleic acids. This Alkalilimnicola ehrlichii (strain ATCC BAA-1101 / DSM 17681 / MLHE-1) protein is dTTP/UTP pyrophosphatase.